We begin with the raw amino-acid sequence, 688 residues long: Alpha-1,4-glucan:maltose-1-phosphate maltosyltransferase (688 aa).

Alpha-maltose 1-phosphate is bound by residues K289, Q349, and D384. The Nucleophile role is filled by D420. Residue N421 participates in alpha-maltose 1-phosphate binding. E449 acts as the Proton donor in catalysis. 560 to 561 (KY) is a binding site for alpha-maltose 1-phosphate.

Belongs to the glycosyl hydrolase 13 family. GlgE subfamily. Homodimer.

The catalysed reaction is alpha-maltose 1-phosphate + [(1-&gt;4)-alpha-D-glucosyl](n) = [(1-&gt;4)-alpha-D-glucosyl](n+2) + phosphate. Functionally, maltosyltransferase that uses maltose 1-phosphate (M1P) as the sugar donor to elongate linear or branched alpha-(1-&gt;4)-glucans. Is involved in a branched alpha-glucan biosynthetic pathway from trehalose, together with TreS, Mak and GlgB. The sequence is that of Alpha-1,4-glucan:maltose-1-phosphate maltosyltransferase from Rhodospirillum rubrum (strain ATCC 11170 / ATH 1.1.1 / DSM 467 / LMG 4362 / NCIMB 8255 / S1).